The chain runs to 346 residues: Protein STAR1 (346 aa).

The tract at residues 23–48 (QRPPPNGTVHACSKSRPPQLEPGKVG) is disordered. The region spanning 112–344 (IRVRGLTRRS…KHPMARRFLE (233 aa)) is the ABC transporter domain. 146–153 (GPSGSGKS) serves as a coordination point for ATP.

This sequence belongs to the ABC transporter superfamily. ABCI family. In terms of assembly, interacts with STAR2. Expressed in roots.

The protein localises to the membrane. Its function is as follows. Associates with STAR2 to form a functional transmembrane ABC transporter required for detoxification of aluminum (Al) in roots. Can specifically transport UDP-glucose. This is Protein STAR1 from Oryza sativa subsp. japonica (Rice).